The primary structure comprises 240 residues: Large ribosomal subunit protein uL2 (240 aa).

Residues 1–11 (MGKRLISQNRG) are compositionally biased toward polar residues. Disordered regions lie at residues 1-28 (MGKR…KGAV) and 206-240 (GGGR…TGRK). Composition is skewed to basic residues over residues 13 to 28 (GTPK…KGAV) and 224 to 240 (SPGR…TGRK).

Belongs to the universal ribosomal protein uL2 family. Part of the 50S ribosomal subunit. Forms a bridge to the 30S subunit in the 70S ribosome.

In terms of biological role, one of the primary rRNA binding proteins. Required for association of the 30S and 50S subunits to form the 70S ribosome, for tRNA binding and peptide bond formation. It has been suggested to have peptidyltransferase activity; this is somewhat controversial. Makes several contacts with the 16S rRNA in the 70S ribosome. The chain is Large ribosomal subunit protein uL2 from Methanococcus maripaludis (strain C5 / ATCC BAA-1333).